The sequence spans 254 residues: Coiled-coil domain-containing protein 152 (254 aa).

Positions 61 to 246 form a coiled coil; sequence SIKEECATLH…LEQRLSVGKD (186 aa).

In terms of tissue distribution, detected in stomach.

The polypeptide is Coiled-coil domain-containing protein 152 (CCDC152) (Homo sapiens (Human)).